The chain runs to 359 residues: Protein Wnt-9b (359 aa).

A signal peptide spans 1–23 (MRPAPALALAALCLLVLPAAAAA). 11 disulfides stabilise this stretch: Cys-91–Cys-102, Cys-137–Cys-145, Cys-147–Cys-164, Cys-212–Cys-226, Cys-214–Cys-221, Cys-293–Cys-318, Cys-307–Cys-313, Cys-317–Cys-357, Cys-333–Cys-348, Cys-335–Cys-345, and Cys-340–Cys-341. Residue Asn-101 is glycosylated (N-linked (GlcNAc...) asparagine). A lipid anchor (O-palmitoleoyl serine; by PORCN) is attached at Ser-218.

Belongs to the Wnt family. As to quaternary structure, forms a soluble 1:1 complex with AFM; this prevents oligomerization and is required for prolonged biological activity. The complex with AFM may represent the physiological form in body fluids. Component of the Wnt-Fzd-LRP5-LRP6 signaling complex that contains a WNT protein, a FZD protein and LRP5 or LRP6. Interacts directly in the complex with LRP6. Interacts with PKD1 (via extracellular domain). Palmitoleoylation is required for efficient binding to frizzled receptors. Depalmitoleoylation leads to Wnt signaling pathway inhibition.

Its subcellular location is the secreted. The protein localises to the extracellular space. The protein resides in the extracellular matrix. In terms of biological role, ligand for members of the frizzled family of seven transmembrane receptors. Functions in the canonical Wnt/beta-catenin signaling pathway. Required for normal embryonic kidney development, and for normal development of the urogenital tract, including uterus and part of the oviduct and the upper vagina in females, and epididymis and vas deferens in males. Activates a signaling cascade in the metanephric mesenchyme that induces tubulogenesis. Acts upstream of WNT4 in the signaling pathways that mediate development of kidney tubules and the Muellerian ducts. Plays a role in cranofacial development and is required for normal fusion of the palate during embryonic development. The protein is Protein Wnt-9b (Wnt9b) of Mus musculus (Mouse).